The primary structure comprises 226 residues: MDLIPQQLKAVTLTHVRYRPGDQLGHFLAWISLVPVFISLGGFVSHFLFRRELQGIFFGIGLVISQFINEFIKTSVEQARPETCTLLEACDSHGWPSSHSQFMFFFATYFSLMGCKGIGFWFGLRSRWIMNLLHWSLAVVTMYSRVYLGYHTVAQVFAGAALGGIVGASWFWVVNSVLYPFFPVIEESVLGRWLYVKDTSHIPDVLKFEYDNARAARKDMDSAKSD.

An N-acetylmethionine modification is found at M1. The next 5 helical transmembrane spans lie at 24–44 (LGHF…GGFV), 52–72 (ELQG…NEFI), 102–122 (FMFF…GFWF), 128–148 (WIMN…RVYL), and 152–174 (TVAQ…FWVV).

This sequence belongs to the PA-phosphatase related phosphoesterase family. As to expression, expressed in root tips, root branch points, vascular tissue of cotyledons and leaves, pistil, anthers and filaments.

It is found in the plastid. It localises to the chloroplast inner membrane. Inhibited by Mg(2+). In terms of biological role, exhibits phosphatidate phosphatase (PAP) activity in vitro. May play a primary role as PAP in plastids. The polypeptide is Lipid phosphate phosphatase gamma (LPPG) (Arabidopsis thaliana (Mouse-ear cress)).